Consider the following 226-residue polypeptide: DNA mismatch repair protein MutH (226 aa).

The protein belongs to the MutH family.

The protein resides in the cytoplasm. Sequence-specific endonuclease that cleaves unmethylated GATC sequences. It is involved in DNA mismatch repair. The protein is DNA mismatch repair protein MutH of Haemophilus ducreyi (strain 35000HP / ATCC 700724).